The sequence spans 181 residues: Bifunctional protein PyrR (181 aa).

Residues 39–40, 104–112, R137, and V161 contribute to the substrate site; these read RR and DDVLYTGRT. The PRPP-binding motif lies at 100 to 112; the sequence is VILVDDVLYTGRT.

Belongs to the purine/pyrimidine phosphoribosyltransferase family. PyrR subfamily.

The enzyme catalyses UMP + diphosphate = 5-phospho-alpha-D-ribose 1-diphosphate + uracil. Functionally, regulates the transcription of the pyrimidine nucleotide (pyr) operon in response to exogenous pyrimidines. Also displays a weak uracil phosphoribosyltransferase activity which is not physiologically significant. The chain is Bifunctional protein PyrR from Pasteurella multocida (strain Pm70).